The sequence spans 212 residues: FMN-dependent NADH:quinone oxidoreductase (212 aa).

Residues Ser10 and Ser17–Ser19 each bind FMN.

The protein belongs to the azoreductase type 1 family. As to quaternary structure, homodimer. FMN serves as cofactor.

The enzyme catalyses 2 a quinone + NADH + H(+) = 2 a 1,4-benzosemiquinone + NAD(+). The catalysed reaction is N,N-dimethyl-1,4-phenylenediamine + anthranilate + 2 NAD(+) = 2-(4-dimethylaminophenyl)diazenylbenzoate + 2 NADH + 2 H(+). Functionally, quinone reductase that provides resistance to thiol-specific stress caused by electrophilic quinones. In terms of biological role, also exhibits azoreductase activity. Catalyzes the reductive cleavage of the azo bond in aromatic azo compounds to the corresponding amines. The protein is FMN-dependent NADH:quinone oxidoreductase of Malacoplasma penetrans (strain HF-2) (Mycoplasma penetrans).